The following is a 691-amino-acid chain: Menaquinone reductase, molybdopterin-binding-like subunit (691 aa).

Positions 1 to 27 form a signal peptide, tat-type signal; sequence MALDRRGFLKFIGGATAGILATPVVWK. The 57-residue stretch at 50–106 folds into the 4Fe-4S Mo/W bis-MGD-type domain; it reads NSYVPTVSKLCPTGIGVRVRLVDGRPVRVIGNPEHPLSKGGVSSIAAAEVQMLYSPA.

It belongs to the prokaryotic molybdopterin-containing oxidoreductase family. As to quaternary structure, the Qrc complex is composed of four subunits: QrcA, QrcB, QrcC and QrcD. Can form a supercomplex with the [NiFe] hydrogenase HynA1 and the tetraheme Type I cytochrome c3 TpIc(3), its physiological electron donors. There is no molybdenum or tungsten pterin cofactor present in the Qrc complex, despite the similarity of QrcB to molybdopterin-containing oxidoreductases. serves as cofactor. Post-translationally, predicted to be exported by the Tat system. The position of the signal peptide cleavage has not been experimentally proven.

The protein localises to the periplasm. Functionally, component of the respiratory Qrc complex, that catalyzes the reduction of the menaquinone pool using electrons transferred from the reduced periplasmic cytochrome c3, and which is probably involved in sulfate respiration. Is likely essential for growth on H(2) or formate since the periplasmic hydrogenases and/or formate dehydrogenases act as primary electron donors for the Qrc complex. The function of the QrcB subunit is unknown; in the absence of a catalytic site, it may provide a structural scaffold for the other subunits. This is Menaquinone reductase, molybdopterin-binding-like subunit from Nitratidesulfovibrio vulgaris (strain ATCC 29579 / DSM 644 / CCUG 34227 / NCIMB 8303 / VKM B-1760 / Hildenborough) (Desulfovibrio vulgaris).